The following is a 458-amino-acid chain: Phosphoglucosamine mutase (458 aa).

Ser108 serves as the catalytic Phosphoserine intermediate. Positions 108, 247, 249, and 251 each coordinate Mg(2+). Ser108 bears the Phosphoserine mark.

This sequence belongs to the phosphohexose mutase family. Requires Mg(2+) as cofactor. Post-translationally, activated by phosphorylation.

The catalysed reaction is alpha-D-glucosamine 1-phosphate = D-glucosamine 6-phosphate. Catalyzes the conversion of glucosamine-6-phosphate to glucosamine-1-phosphate. This chain is Phosphoglucosamine mutase, found in Nitrosomonas eutropha (strain DSM 101675 / C91 / Nm57).